Reading from the N-terminus, the 124-residue chain is Small ribosomal subunit protein uS12 (124 aa).

Asp89 is modified (3-methylthioaspartic acid).

This sequence belongs to the universal ribosomal protein uS12 family. As to quaternary structure, part of the 30S ribosomal subunit. Contacts proteins S8 and S17. May interact with IF1 in the 30S initiation complex.

In terms of biological role, with S4 and S5 plays an important role in translational accuracy. Functionally, interacts with and stabilizes bases of the 16S rRNA that are involved in tRNA selection in the A site and with the mRNA backbone. Located at the interface of the 30S and 50S subunits, it traverses the body of the 30S subunit contacting proteins on the other side and probably holding the rRNA structure together. The combined cluster of proteins S8, S12 and S17 appears to hold together the shoulder and platform of the 30S subunit. The protein is Small ribosomal subunit protein uS12 of Pectobacterium atrosepticum (strain SCRI 1043 / ATCC BAA-672) (Erwinia carotovora subsp. atroseptica).